The chain runs to 117 residues: Large ribosomal subunit protein bL20 (117 aa).

It belongs to the bacterial ribosomal protein bL20 family.

Binds directly to 23S ribosomal RNA and is necessary for the in vitro assembly process of the 50S ribosomal subunit. It is not involved in the protein synthesizing functions of that subunit. In Pelotomaculum thermopropionicum (strain DSM 13744 / JCM 10971 / SI), this protein is Large ribosomal subunit protein bL20.